The chain runs to 320 residues: o-succinylbenzoate synthase (320 aa).

Residue K133 is the Proton donor of the active site. Mg(2+) contacts are provided by D161, E190, and D213. K235 functions as the Proton acceptor in the catalytic mechanism.

This sequence belongs to the mandelate racemase/muconate lactonizing enzyme family. MenC type 1 subfamily. It depends on a divalent metal cation as a cofactor.

The catalysed reaction is (1R,6R)-6-hydroxy-2-succinyl-cyclohexa-2,4-diene-1-carboxylate = 2-succinylbenzoate + H2O. Its pathway is quinol/quinone metabolism; 1,4-dihydroxy-2-naphthoate biosynthesis; 1,4-dihydroxy-2-naphthoate from chorismate: step 4/7. It functions in the pathway quinol/quinone metabolism; menaquinone biosynthesis. Its function is as follows. Converts 2-succinyl-6-hydroxy-2,4-cyclohexadiene-1-carboxylate (SHCHC) to 2-succinylbenzoate (OSB). The polypeptide is o-succinylbenzoate synthase (Escherichia coli O157:H7).